The sequence spans 1296 residues: Phosphoribosylformylglycinamidine synthase (1296 aa).

The interval 304–323 is disordered; that stretch reads WPGAATGSGGEIRDEGATGR. Residues 306-317 and A677 contribute to the ATP site; that span reads GAATGSGGEIRD. D678, E717, N721, and D885 together coordinate Mg(2+). S887 contacts ATP. Basic and acidic residues predominate over residues 1000–1013; sequence PDCADQEHQAKQDE. The disordered stretch occupies residues 1000–1019; it reads PDCADQEHQAKQDESDPGLN. In terms of domain architecture, Glutamine amidotransferase type-1 spans 1043 to 1296; sequence VAVLREQGVN…MFRNARKQLG (254 aa). C1136 (nucleophile) is an active-site residue. Residues H1261 and E1263 contribute to the active site.

It in the N-terminal section; belongs to the FGAMS family. Monomer.

Its subcellular location is the cytoplasm. The enzyme catalyses N(2)-formyl-N(1)-(5-phospho-beta-D-ribosyl)glycinamide + L-glutamine + ATP + H2O = 2-formamido-N(1)-(5-O-phospho-beta-D-ribosyl)acetamidine + L-glutamate + ADP + phosphate + H(+). It participates in purine metabolism; IMP biosynthesis via de novo pathway; 5-amino-1-(5-phospho-D-ribosyl)imidazole from N(2)-formyl-N(1)-(5-phospho-D-ribosyl)glycinamide: step 1/2. Its function is as follows. Phosphoribosylformylglycinamidine synthase involved in the purines biosynthetic pathway. Catalyzes the ATP-dependent conversion of formylglycinamide ribonucleotide (FGAR) and glutamine to yield formylglycinamidine ribonucleotide (FGAM) and glutamate. This chain is Phosphoribosylformylglycinamidine synthase, found in Yersinia pestis bv. Antiqua (strain Antiqua).